Here is a 336-residue protein sequence, read N- to C-terminus: MKSTSKIYTDKDSNLDVIKGKRIAVLGYGSQGRAWAQNLRDSGLNVVVGLEREGKSWELAKSDGIIPLHTKDAVKDADIIVFLVPDMVQRTLWLESVQPYMKKGADLVFAHGFNIHYKLIEPPKDSDVYMIAPKGPGPTVREYYKAGGGVPALVAIQQDVSGTALQKALAIAKGIGATRAGVIPTTFKEETETDLFGEQVILVGGIMELMKAAFETLVEEGYQPEVAYFETINELKMLVDLVYEKGITGMVKAVSDTAKYGGMTVGKFVINEDVRKRMKEALQRIKSGKFAEEWVEEYGRGMPTVVNGLSQVQNSLEEKIGNQLKDLIQKGKPKKS.

The region spanning 5–185 is the KARI N-terminal Rossmann domain; sequence SKIYTDKDSN…GATRAGVIPT (181 aa). NADP(+) is bound by residues 28–31, serine 56, and 86–89; these read YGSQ and DMVQ. The active site involves histidine 111. An NADP(+)-binding site is contributed by glycine 137. Positions 186–331 constitute a KARI C-terminal knotted domain; that stretch reads TFKEETETDL…NQLKDLIQKG (146 aa). Residues aspartate 194, glutamate 198, glutamate 230, and glutamate 234 each contribute to the Mg(2+) site. Residue serine 255 coordinates substrate.

This sequence belongs to the ketol-acid reductoisomerase family. The cofactor is Mg(2+).

It carries out the reaction (2R)-2,3-dihydroxy-3-methylbutanoate + NADP(+) = (2S)-2-acetolactate + NADPH + H(+). The enzyme catalyses (2R,3R)-2,3-dihydroxy-3-methylpentanoate + NADP(+) = (S)-2-ethyl-2-hydroxy-3-oxobutanoate + NADPH + H(+). The protein operates within amino-acid biosynthesis; L-isoleucine biosynthesis; L-isoleucine from 2-oxobutanoate: step 2/4. It participates in amino-acid biosynthesis; L-valine biosynthesis; L-valine from pyruvate: step 2/4. Functionally, involved in the biosynthesis of branched-chain amino acids (BCAA). Catalyzes an alkyl-migration followed by a ketol-acid reduction of (S)-2-acetolactate (S2AL) to yield (R)-2,3-dihydroxy-isovalerate. In the isomerase reaction, S2AL is rearranged via a Mg-dependent methyl migration to produce 3-hydroxy-3-methyl-2-ketobutyrate (HMKB). In the reductase reaction, this 2-ketoacid undergoes a metal-dependent reduction by NADPH to yield (R)-2,3-dihydroxy-isovalerate. This chain is Ketol-acid reductoisomerase (NADP(+)), found in Saccharolobus islandicus (strain Y.N.15.51 / Yellowstone #2) (Sulfolobus islandicus).